The following is a 102-amino-acid chain: MICOS complex subunit MIC12 (102 aa).

A helical transmembrane segment spans residues 4-26 (VLKLTSVTLAASSLAAAGYFYAF).

It belongs to the MICOS complex subunit Mic12 family. In terms of assembly, component of the mitochondrial contact site and cristae organizing system (MICOS) complex.

The protein resides in the mitochondrion inner membrane. Its function is as follows. Component of the MICOS complex, a large protein complex of the mitochondrial inner membrane that plays crucial roles in the maintenance of crista junctions, inner membrane architecture, and formation of contact sites to the outer membrane. This Lachancea thermotolerans (strain ATCC 56472 / CBS 6340 / NRRL Y-8284) (Yeast) protein is MICOS complex subunit MIC12 (AIM5).